Here is a 287-residue protein sequence, read N- to C-terminus: Putative esterase/lipase HI_0193 (287 aa).

Positions 47–273 (PVLIFIHGLF…SGHWVHAEKP (227 aa)) constitute an AB hydrolase-1 domain. Active-site residues include S119 and H266.

It belongs to the DmpD/TodF/XylF esterase family.

This is Putative esterase/lipase HI_0193 from Haemophilus influenzae (strain ATCC 51907 / DSM 11121 / KW20 / Rd).